A 904-amino-acid polypeptide reads, in one-letter code: Phosphoenolpyruvate carboxylase (904 aa).

Active-site residues include His151 and Lys570.

This sequence belongs to the PEPCase type 1 family. Requires Mg(2+) as cofactor.

The catalysed reaction is oxaloacetate + phosphate = phosphoenolpyruvate + hydrogencarbonate. Functionally, forms oxaloacetate, a four-carbon dicarboxylic acid source for the tricarboxylic acid cycle. This chain is Phosphoenolpyruvate carboxylase, found in Xanthomonas campestris pv. campestris (strain 8004).